Here is a 383-residue protein sequence, read N- to C-terminus: Photosynthetic reaction center cytochrome c subunit (383 aa).

The signal sequence occupies residues 1–22; the sequence is MNLGKQLTLPAVAVVASVVLLG. The N-palmitoyl cysteine moiety is linked to residue Cys-23. The S-diacylglycerol cysteine moiety is linked to residue Cys-23. Met-94, Cys-107, Cys-110, His-111, Met-130, His-144, Cys-152, Cys-155, His-156, Met-236, Cys-247, Cys-250, His-251, Cys-307, Cys-310, and His-311 together coordinate heme. Residues 335–383 form a disordered region; that stretch reads PAEAAPATEEAPAAEAEAVEAAPVEEAAPAPVEQAAAPVEDAAPAPQQL.

Component of the photosynthetic reaction center composed of protein subunits L (PufL), M (PufM), H (PuhA) and cytochrome C (PufC). The reaction center interacts with light-harvesting antenna complex LH1. Post-translationally, binds 4 heme groups per subunit.

The protein localises to the cellular chromatophore membrane. The reaction center of purple bacteria contains a tightly bound cytochrome molecule which re-reduces the photo oxidized primary electron donor. In Allochromatium vinosum (strain ATCC 17899 / DSM 180 / NBRC 103801 / NCIMB 10441 / D) (Chromatium vinosum), this protein is Photosynthetic reaction center cytochrome c subunit (pufC).